Here is a 406-residue protein sequence, read N- to C-terminus: Methylthioribose-1-phosphate isomerase (406 aa).

The active-site Proton donor is the Asp277.

It belongs to the eIF-2B alpha/beta/delta subunits family. MtnA subfamily.

Its subcellular location is the cytoplasm. It localises to the nucleus. It carries out the reaction 5-(methylsulfanyl)-alpha-D-ribose 1-phosphate = 5-(methylsulfanyl)-D-ribulose 1-phosphate. Its pathway is amino-acid biosynthesis; L-methionine biosynthesis via salvage pathway; L-methionine from S-methyl-5-thio-alpha-D-ribose 1-phosphate: step 1/6. Catalyzes the interconversion of methylthioribose-1-phosphate (MTR-1-P) into methylthioribulose-1-phosphate (MTRu-1-P). The sequence is that of Methylthioribose-1-phosphate isomerase from Debaryomyces hansenii (strain ATCC 36239 / CBS 767 / BCRC 21394 / JCM 1990 / NBRC 0083 / IGC 2968) (Yeast).